A 521-amino-acid polypeptide reads, in one-letter code: MEELQRYLEKGRSRQQHFLYPLLFQEYIYALAHDHGLNSSIFYEPVEIISYDNKSSLALVKRLITRIYQQNYLISSVNDSNQNQFLGHNAFFYSHFFSQIISESFAIIVEIPFSLRLVSFFEEKEIPIYHNLRSIHSIFPFLEGKLSHLNYVSDILIPHPIHMEILVQTLQCRVQDVPFLHLLRFFLHEYHNWNSLLITQNKSIYFFSKENKRIFRLLYNSYVFECEFLLVFFRKQSYYLRLTSSGTFLERTHFYRKIEHLPIEHFFVVCRNYFHRTRWFFKNPFMHYVRYQRKAILASRGTHFLMKKWKYHFVNFWQYYFHFWSRPYRIHINHLSNYSFYFLGYLSSLLINSSAVRNQMLENSFLIDTVTNKFDTIVPVILLIRSLSKAKFCTVSGHPISKPIWADLSDSDIIDRFGRICRNLSHYHSGSSKKQDLYRIKYILRLSCARTLARKHKSTVRTFLRRLGSGLLEEFFTEEEQVLSLIFPKRTPFTLHGSHRERIWYLDIICINDLVNHSXLS.

It belongs to the intron maturase 2 family. MatK subfamily.

The protein resides in the plastid. The protein localises to the chloroplast. In terms of biological role, usually encoded in the trnK tRNA gene intron. Probably assists in splicing its own and other chloroplast group II introns. This is Maturase K from Kniphofia uvaria (Red-hot poker).